The chain runs to 152 residues: Ribosome maturation factor RimP (152 aa).

It belongs to the RimP family.

The protein resides in the cytoplasm. Functionally, required for maturation of 30S ribosomal subunits. The protein is Ribosome maturation factor RimP of Burkholderia multivorans (strain ATCC 17616 / 249).